The primary structure comprises 323 residues: Mycothiol acetyltransferase (323 aa).

N-acetyltransferase domains are found at residues 5 to 145 (LTTD…LPLR) and 168 to 323 (VEIR…PEER). Residue glutamate 36 coordinates 1D-myo-inositol 2-(L-cysteinylamino)-2-deoxy-alpha-D-glucopyranoside. 83 to 85 (VAV) serves as a coordination point for acetyl-CoA. Residues glutamate 195, lysine 236, and glutamate 252 each coordinate 1D-myo-inositol 2-(L-cysteinylamino)-2-deoxy-alpha-D-glucopyranoside. Acetyl-CoA is bound by residues 256–258 (VGV) and 263–269 (QGSGLGR). Tyrosine 290 serves as a coordination point for 1D-myo-inositol 2-(L-cysteinylamino)-2-deoxy-alpha-D-glucopyranoside. Residue 295 to 300 (NRPAVQ) coordinates acetyl-CoA.

This sequence belongs to the acetyltransferase family. MshD subfamily. As to quaternary structure, monomer.

The catalysed reaction is 1D-myo-inositol 2-(L-cysteinylamino)-2-deoxy-alpha-D-glucopyranoside + acetyl-CoA = mycothiol + CoA + H(+). Functionally, catalyzes the transfer of acetyl from acetyl-CoA to desacetylmycothiol (Cys-GlcN-Ins) to form mycothiol. This chain is Mycothiol acetyltransferase, found in Thermobifida fusca (strain YX).